The chain runs to 90 residues: Kunitz-type serine protease inhibitor C5 (90 aa).

The signal sequence occupies residues 1-24; sequence MSSGGLLLLLALLTLWAELTPISG. The BPTI/Kunitz inhibitor domain occupies 31–81; the sequence is CNLAPESGRCRGHLRRIYYNPDSNKCEVFFYGGCGGNDNNFETRKKCRQTC. 3 cysteine pairs are disulfide-bonded: Cys-31–Cys-81, Cys-40–Cys-64, and Cys-56–Cys-77. Residues 85 to 90 constitute a propeptide that is removed on maturation; the sequence is RKGRPT.

The protein belongs to the venom Kunitz-type family. As to expression, expressed by the venom gland.

Its subcellular location is the secreted. Functionally, serine protease inhibitor that inhibits trypsin. In Daboia siamensis (Eastern Russel's viper), this protein is Kunitz-type serine protease inhibitor C5.